A 286-amino-acid polypeptide reads, in one-letter code: Pyridoxal kinase PdxY (286 aa).

Substrate contacts are provided by residues serine 9 and 44–45 (MQ). Residues aspartate 111, glutamate 147, and lysine 180 each contribute to the ATP site. Aspartate 221 contributes to the substrate binding site.

It belongs to the pyridoxine kinase family. PdxY subfamily. Homodimer. It depends on Mg(2+) as a cofactor.

It catalyses the reaction pyridoxal + ATP = pyridoxal 5'-phosphate + ADP + H(+). It participates in cofactor metabolism; pyridoxal 5'-phosphate salvage; pyridoxal 5'-phosphate from pyridoxal: step 1/1. Its function is as follows. Pyridoxal kinase involved in the salvage pathway of pyridoxal 5'-phosphate (PLP). Catalyzes the phosphorylation of pyridoxal to PLP. The polypeptide is Pyridoxal kinase PdxY (Burkholderia orbicola (strain AU 1054)).